The sequence spans 245 residues: Type II restriction enzyme MjaIV (245 aa).

The catalysed reaction is Endonucleolytic cleavage of DNA to give specific double-stranded fragments with terminal 5'-phosphates.. Its function is as follows. A P subtype restriction enzyme that recognizes the double-stranded sequence 5'-GTNNAC-3'; the cleavage site is unknown. The chain is Type II restriction enzyme MjaIV (mjaIVR) from Methanocaldococcus jannaschii (strain ATCC 43067 / DSM 2661 / JAL-1 / JCM 10045 / NBRC 100440) (Methanococcus jannaschii).